We begin with the raw amino-acid sequence, 221 residues long: Ependymin-2 (221 aa).

The N-terminal stretch at 1–21 (MQDFAFAALSIWLCLGATALA) is a signal peptide. Residues Asn-33, Asn-73, and Asn-97 are each glycosylated (N-linked (GlcNAc...) asparagine).

The protein belongs to the ependymin family. Binds calcium through the terminal sialic acids. EPDs are synthesized in the meninx and secreted in the cerebrospinal fluid.

The protein resides in the secreted. May play a role in neural plasticity. May be involved during axon regeneration. This is Ependymin-2 (epd2) from Oncorhynchus mykiss (Rainbow trout).